Here is a 704-residue protein sequence, read N- to C-terminus: Elongation factor G (704 aa).

Residues 10 to 290 (NKVRNIGIMA…AVVDFLPNPL (281 aa)) enclose the tr-type G domain. GTP is bound by residues 19 to 26 (AHIDAGKT), 83 to 87 (DTPGH), and 137 to 140 (NKMD).

The protein belongs to the TRAFAC class translation factor GTPase superfamily. Classic translation factor GTPase family. EF-G/EF-2 subfamily.

It is found in the cytoplasm. Its function is as follows. Catalyzes the GTP-dependent ribosomal translocation step during translation elongation. During this step, the ribosome changes from the pre-translocational (PRE) to the post-translocational (POST) state as the newly formed A-site-bound peptidyl-tRNA and P-site-bound deacylated tRNA move to the P and E sites, respectively. Catalyzes the coordinated movement of the two tRNA molecules, the mRNA and conformational changes in the ribosome. The protein is Elongation factor G of Paenarthrobacter aurescens (strain TC1).